The sequence spans 446 residues: Probable arogenate/prephenate dehydrogenase (446 aa).

A Prephenate/arogenate dehydrogenase domain is found at 6-288 (LTISIIGGTD…SEAKRGAYYS (283 aa)).

The protein in the N-terminal section; belongs to the prephenate/arogenate dehydrogenase family.

This chain is Probable arogenate/prephenate dehydrogenase, found in Methanocaldococcus jannaschii (strain ATCC 43067 / DSM 2661 / JAL-1 / JCM 10045 / NBRC 100440) (Methanococcus jannaschii).